The following is a 151-amino-acid chain: Transcriptional repressor NrdR (151 aa).

A zinc finger spans residues 3-34; that stretch reads CPFCSSDNTRVIDSRPADDNSSIRRRRLCDDC. Residues 49-139 form the ATP-cone domain; the sequence is LIVIKKDNNR…VYREFKDVNT (91 aa).

The protein belongs to the NrdR family. It depends on Zn(2+) as a cofactor.

Negatively regulates transcription of bacterial ribonucleotide reductase nrd genes and operons by binding to NrdR-boxes. The chain is Transcriptional repressor NrdR from Agathobacter rectalis (strain ATCC 33656 / DSM 3377 / JCM 17463 / KCTC 5835 / VPI 0990) (Eubacterium rectale).